Reading from the N-terminus, the 396-residue chain is MSGDKKSRSVIYKKTSRDKAVSVYLGKRDYVDHIESVDPVDGVVFVDPDLLKGKKVYVTLTCAFRYGNEDIDVIGLTFRKDLFFARIQVYPPVEDVKCLTKVQERLMKKLGNNAYPFVMAFPDYLPCSVSLQPAMSDVNKACGVDFEIKAFSASNLEDRYHKKNSVRLLIRKIQYAPDQPGPTPRAETSWQFFMSDKPLHLTASLAKEVFYHGETITVAVTVTNNSEKTVKKISTSVEQTANVVLYSSDFYTKTVAFDESDEKVSPKSTYKHTFTLLPLLAYNREKREIALDGKLKHEDTNLASSTLLKEGIDRTVMGILVDYKIKVTLTVSGLLGDMTSSEVSTELPFILMHPKPDSGAKESEQEEDFVFEDFARDHLKDELQPEEKEEEEEDEK.

This sequence belongs to the arrestin family.

Functionally, arrestin is one of the major proteins of the ros (retinal rod outer segments); it binds to photoactivated-phosphorylated rhodopsin, thereby apparently preventing the transducin-mediated activation of phosphodiesterase. In Lithobates pipiens (Northern leopard frog), this protein is S-arrestin.